Reading from the N-terminus, the 30-residue chain is Methanobactin mb-OB3b (30 aa).

Positions 1-19 (MTVKIAQKKVLPVIGRAAA) are excised as a propeptide. Residues 20–21 (LC) constitute a cross-link (2-(3-methylbutanoyl)-5-hydroxyoxazole-4-carbothionic acid (Leu-Cys)). The Cu(2+) site is built by C21 and C27. C24 and C29 are disulfide-bonded. The proline 5-hydroxy-oxazole-4-carbothionic acid (Pro-Cys) cross-link spans 26–27 (PC).

In terms of assembly, monomer. In the absence of copper, may exist as a dimer or an oligomer.

It is found in the secreted. The protein resides in the cytoplasm. The enzyme catalyses 2 superoxide + 2 H(+) = H2O2 + O2. Chalkophore involved in scavenging, uptake and suppression of toxicity of copper. Each apo-methanobactin (apo-mb) complexes 1 Cu(2+) or Cu(1+) ion to form Cu(1+)-mb (Cu-mb) which is then taken up by the cell. Enhances growth rate in the presence of copper and reduces growth lag upon exposition to elevated levels of copper. Cu-mb contributes to the switchover from soluble methane monooxygenase (sMMO) to the membrane-bound particulate MMO (pMMO) by inducing transcription of pMMO subunit A. It also stimulates the enzymatic activity of pMMO. In the absence of copper, binds other metal ions, like Zn(2+), Ag(1+), Au(3+), Co(2+), Cd(2+), Fe(3+), Hg(2+), Mn(2+), Ni(2+), Pb(2+) or U(6+), but not Ba(2+), Ca(2+), La(2+), Mg(2+) or Sr(2+). Uptake is an active process, which may involve TonB-dependent transporters, and as such does not involve porins. Cu-Mb can be taken up by other methanotrophic bacteria but not by E.coli. Has Cu-dependent superoxide dismutase-like activity. Shows reductant-dependent oxidase and hydrogen peroxide reductase activities. Reduces copper-levels in liver in a rat model of Wilson disease. The chain is Methanobactin mb-OB3b from Methylosinus trichosporium.